The chain runs to 210 residues: FMN-dependent NADH:quinone oxidoreductase (210 aa).

Residues 17–19 (SCS) and 148–151 (SSGG) each bind FMN.

It belongs to the azoreductase type 1 family. As to quaternary structure, homodimer. It depends on FMN as a cofactor.

It carries out the reaction 2 a quinone + NADH + H(+) = 2 a 1,4-benzosemiquinone + NAD(+). The enzyme catalyses N,N-dimethyl-1,4-phenylenediamine + anthranilate + 2 NAD(+) = 2-(4-dimethylaminophenyl)diazenylbenzoate + 2 NADH + 2 H(+). Quinone reductase that provides resistance to thiol-specific stress caused by electrophilic quinones. Its function is as follows. Also exhibits azoreductase activity. Catalyzes the reductive cleavage of the azo bond in aromatic azo compounds to the corresponding amines. The sequence is that of FMN-dependent NADH:quinone oxidoreductase from Geotalea uraniireducens (strain Rf4) (Geobacter uraniireducens).